Here is a 491-residue protein sequence, read N- to C-terminus: Chromosomal replication initiator protein DnaA (491 aa).

A domain I, interacts with DnaA modulators region spans residues 1-68 (MTSIWGQIQH…RTAACGVIGD (68 aa)). The tract at residues 68–146 (DTVEVVVTAG…PLDWAPVPQS (79 aa)) is domain II. Positions 147-364 (RTNWRFSFDD…SCLHNLILKA (218 aa)) are domain III, AAA+ region. The ATP site is built by glycine 190, glycine 192, lysine 193, and threonine 194. Residues 365-491 (KLLNRQISLE…RNGRITHARH (127 aa)) form a domain IV, binds dsDNA region.

The protein belongs to the DnaA family. Oligomerizes as a right-handed, spiral filament on DNA at oriC.

It localises to the cytoplasm. Functionally, plays an essential role in the initiation and regulation of chromosomal replication. ATP-DnaA binds to the origin of replication (oriC) to initiate formation of the DNA replication initiation complex once per cell cycle. Binds the DnaA box (a 9 base pair repeat at the origin) and separates the double-stranded (ds)DNA. Forms a right-handed helical filament on oriC DNA; dsDNA binds to the exterior of the filament while single-stranded (ss)DNA is stabiized in the filament's interior. The ATP-DnaA-oriC complex binds and stabilizes one strand of the AT-rich DNA unwinding element (DUE), permitting loading of DNA polymerase. After initiation quickly degrades to an ADP-DnaA complex that is not apt for DNA replication. Binds acidic phospholipids. In Nitratidesulfovibrio vulgaris (strain ATCC 29579 / DSM 644 / CCUG 34227 / NCIMB 8303 / VKM B-1760 / Hildenborough) (Desulfovibrio vulgaris), this protein is Chromosomal replication initiator protein DnaA.